The chain runs to 276 residues: uncharacterized protein (276 aa).

Residues 20 to 137 (PVLIFIPGAN…PPINTFLPDS (118 aa)) form the AB hydrolase-1 domain.

Belongs to the AB hydrolase superfamily.

This is an uncharacterized protein from Staphylococcus aureus (strain MRSA252).